A 340-amino-acid chain; its full sequence is HTH-type transcriptional regulator CelR (340 aa).

Residues 1–61 enclose the HTH lacI-type domain; the sequence is MERRRRPTLE…PNRAARTLVT (61 aa). The H-T-H motif DNA-binding region spans 9–28; that stretch reads LEMVAALAGVGRGTVSRVIN.

The protein resides in the cytoplasm. Activity is controlled by cytoplasmic cellobiose levels. Binding of CelR to the celE promoter is inhibited specifically by low concentrations of cellobiose, the major end product of cellulases. Activity may also be regulated through post-translational modification. Functionally, transcriptional regulator that regulates the expression of all six cellulases, encoded by the cel genes (designated celA through celF). Acts as a repressor. Specifically binds to a 14-bp inverted repeat site, which is present in the upstream region of the cellulase genes. This chain is HTH-type transcriptional regulator CelR, found in Thermobifida fusca (Thermomonospora fusca).